A 525-amino-acid chain; its full sequence is CTP synthase (525 aa).

The segment at 1-269 (MKYIIVTGGV…ADAITTHLHL (269 aa)) is amidoligase domain. Position 12 (Ser12) interacts with CTP. Ser12 lines the UTP pocket. ATP contacts are provided by residues 13 to 18 (GLGKGI) and Asp70. 2 residues coordinate Mg(2+): Asp70 and Glu144. Residues 151–153 (DIE), 190–195 (KTKPTQ), and Lys226 each bind CTP. UTP contacts are provided by residues 190–195 (KTKPTQ) and Lys226. A Glutamine amidotransferase type-1 domain is found at 292 to 524 (VAIVSKYGIE…VSACRKNKKT (233 aa)). L-glutamine is bound at residue Gly348. The active-site Nucleophile; for glutamine hydrolysis is the Cys375. L-glutamine-binding positions include 376-379 (LGFQ), Glu399, and Arg454. Catalysis depends on residues His497 and Glu499.

Belongs to the CTP synthase family. In terms of assembly, homotetramer.

The catalysed reaction is UTP + L-glutamine + ATP + H2O = CTP + L-glutamate + ADP + phosphate + 2 H(+). It catalyses the reaction L-glutamine + H2O = L-glutamate + NH4(+). It carries out the reaction UTP + NH4(+) + ATP = CTP + ADP + phosphate + 2 H(+). The protein operates within pyrimidine metabolism; CTP biosynthesis via de novo pathway; CTP from UDP: step 2/2. Allosterically activated by GTP, when glutamine is the substrate; GTP has no effect on the reaction when ammonia is the substrate. The allosteric effector GTP functions by stabilizing the protein conformation that binds the tetrahedral intermediate(s) formed during glutamine hydrolysis. Inhibited by the product CTP, via allosteric rather than competitive inhibition. Catalyzes the ATP-dependent amination of UTP to CTP with either L-glutamine or ammonia as the source of nitrogen. Regulates intracellular CTP levels through interactions with the four ribonucleotide triphosphates. This Methanosphaerula palustris (strain ATCC BAA-1556 / DSM 19958 / E1-9c) protein is CTP synthase.